Here is a 213-residue protein sequence, read N- to C-terminus: Agglutinin isolectin 2 (213 aa).

An N-terminal signal peptide occupies residues 1–27 (MRKMMSTMALTLGAAVFLAFAAATAQA). At glutamine 28 the chain carries Pyrrolidone carboxylic acid. Chitin-binding type-1 domains are found at residues 28-69 (QRCG…ACWT), 70-112 (SKRC…PCRA), 113-155 (DIKC…ACST), and 156-198 (DKPC…GCDA). 16 disulfides stabilise this stretch: cysteine 30/cysteine 45, cysteine 39/cysteine 51, cysteine 44/cysteine 58, cysteine 62/cysteine 67, cysteine 73/cysteine 88, cysteine 82/cysteine 94, cysteine 87/cysteine 101, cysteine 105/cysteine 110, cysteine 116/cysteine 131, cysteine 125/cysteine 137, cysteine 130/cysteine 144, cysteine 148/cysteine 153, cysteine 159/cysteine 174, cysteine 168/cysteine 180, cysteine 173/cysteine 187, and cysteine 191/cysteine 196. Residue 37-39 (MEC) coordinates substrate. Position 89–100 (89–100 (SQYGHCGFGAEY)) interacts with substrate. Substrate is bound at residue 141 to 142 (SE). The propeptide occupies 199–213 (VFAGAITANSTLLAE).

As to quaternary structure, homodimer, u-shaped.

In terms of biological role, N-acetyl-D-glucosamine / N-acetyl-D-neuraminic acid binding lectin. The sequence is that of Agglutinin isolectin 2 from Triticum aestivum (Wheat).